The chain runs to 268 residues: Undecaprenyl-diphosphatase (268 aa).

The next 6 membrane-spanning stretches (helical) occupy residues 39-59 (SETF…LIYK), 75-95 (LPYF…GLWV), 106-126 (LGPV…TEKV), 179-199 (TEFA…FAWI), 214-234 (LTLA…VKWL), and 243-263 (FIPF…LVAL).

Belongs to the UppP family.

It localises to the cell inner membrane. It carries out the reaction di-trans,octa-cis-undecaprenyl diphosphate + H2O = di-trans,octa-cis-undecaprenyl phosphate + phosphate + H(+). Its function is as follows. Catalyzes the dephosphorylation of undecaprenyl diphosphate (UPP). Confers resistance to bacitracin. This is Undecaprenyl-diphosphatase from Methylacidiphilum infernorum (isolate V4) (Methylokorus infernorum (strain V4)).